The following is a 142-amino-acid chain: MTTPSMEDYIEQIYMLIEEKGYARVSDIAEALAVHPSSVTKMVQKLDKDEYLIYEKYRGLVLTSKGKKIGKRLVYRHELLEQFLRIIGVDEEKIYNDVEGIEHHLSWNSIDRIGDLVQYFEEDDARKKDLKSIQKKTEHHNQ.

Positions 1-63 constitute an HTH dtxR-type domain; sequence MTTPSMEDYI…YEKYRGLVLT (63 aa). Residues D8, E11, H77, E99, E102, and H103 each contribute to the Cd(2+) site. Mn(2+) is bound by residues D8, E11, H77, E99, E102, and H103.

The protein belongs to the DtxR/MntR family. As to quaternary structure, homodimer.

Its subcellular location is the cytoplasm. With respect to regulation, DNA binding is strongly activated by Mn(2+) and Cd(2+), but it is poorly activated by non-cognate metal cations, including Co(2+), Fe(2+), Ni(2+), Ca(2+) and Zn(2+). In the strict absence of divalent transition metal ions, MntR has a low affinity for DNA. Its function is as follows. Central regulator of manganese homeostasis that regulates the expression of both manganese uptake and efflux systems. In the presence of high levels of manganese, it mediates repression of the manganese uptake systems MntH and MntABCD and activation of the efflux systems MneP and MneS. Binds with high affinity to the regulatory regions of its target genes. The manganese concentration required for activation of efflux is higher than that for repression of uptake. The polypeptide is HTH-type transcriptional regulator MntR (Bacillus subtilis (strain 168)).